We begin with the raw amino-acid sequence, 376 residues long: 3-dehydroquinate synthase (376 aa).

NAD(+) is bound by residues 115–119 (GVIGD), 139–140 (TS), K152, and K161. Residues E194, H256, and H275 each coordinate Zn(2+).

The protein belongs to the sugar phosphate cyclases superfamily. Dehydroquinate synthase family. The cofactor is Co(2+). Zn(2+) is required as a cofactor. NAD(+) serves as cofactor.

The protein resides in the cytoplasm. The enzyme catalyses 7-phospho-2-dehydro-3-deoxy-D-arabino-heptonate = 3-dehydroquinate + phosphate. Its pathway is metabolic intermediate biosynthesis; chorismate biosynthesis; chorismate from D-erythrose 4-phosphate and phosphoenolpyruvate: step 2/7. Its function is as follows. Catalyzes the conversion of 3-deoxy-D-arabino-heptulosonate 7-phosphate (DAHP) to dehydroquinate (DHQ). The protein is 3-dehydroquinate synthase of Rhizobium etli (strain CIAT 652).